We begin with the raw amino-acid sequence, 149 residues long: Oocyte-expressed protein (149 aa).

The KH; atypical domain occupies 49–110 (PLVFYLEAWL…RVQNRVKSVL (62 aa)).

Belongs to the KHDC1 family. As to quaternary structure, component of the subcortical maternal complex (SCMC), at least composed of NLRP5, KHDC3, OOEP, and TLE6. Within the complex, interacts with NLRP5, KHDC3 and TLE6. As part of the SCMC interacts with the SCMC-associated protein NLRP4F. The SCMC may facilitate translocation of its components between the nuclear and cytoplasmic compartments. Forms a scaffold complex with KHDC3/FILIA, and interacts with BLM and TRIM25 at DNA replication forks.

The protein resides in the cytoplasm. The protein localises to the nucleus. Its function is as follows. Component of the subcortical maternal complex (SCMC), a multiprotein complex that plays a key role in early embryonic development. The SCMC complex is a structural constituent of cytoplasmic lattices, which consist in fibrous structures found in the cytoplasm of oocytes and preimplantation embryos. They are required to store maternal proteins critical for embryonic development, such as proteins that control epigenetic reprogramming of the preimplantation embryo, and prevent their degradation or activation. As part of the OOEP-KHDC3 scaffold, recruits BLM and TRIM25 to DNA replication forks, thereby promoting the ubiquitination of BLM by TRIM25, enhancing BLM retainment at replication forks and therefore promoting stalled replication fork restart. Positively regulates the homologous recombination-mediated DNA double-strand break (DSB) repair pathway by regulating ATM activation and RAD51 recruitment to DSBs in oocytes. Thereby contributes to oocyte survival and the resumption and completion of meiosis. The polypeptide is Oocyte-expressed protein (OOEP) (Canis lupus familiaris (Dog)).